A 319-amino-acid chain; its full sequence is GATA transcription factor 18 (319 aa).

The segment covering 1–15 has biased composition (low complexity); that stretch reads MPDAAAAAAAAQDAD. Residues 1–74 form a disordered region; sequence MPDAAAAAAA…AAPEPVSALL (74 aa). Acidic residues predominate over residues 32–60; that stretch reads NNDDDGDDGTEEDEEEDDDEEGDEEELPP. Positions 74–109 constitute a Tify domain; that stretch reads LPGSPNQLTLLFQGEVYVFESVTPEKVQAVLLLLGS. Positions 143-185 constitute a CCT domain; that stretch reads RVASLIRFREKRKERNFDKKIRYAVRKEVALRMQRRKGQFAGR. Residues 215-242 form a GATA-type zinc finger; sequence CQNCGTSEKMTPAMRRGPAGPRTLCNAC. The tract at residues 292 to 319 is disordered; it reads ITASHGEVMGDSTPANEAEIGAPKAQSQ.

The protein belongs to the type IV zinc-finger family. Class C subfamily.

It localises to the nucleus. In terms of biological role, transcriptional activator that specifically binds 5'-GATA-3' or 5'-GAT-3' motifs within gene promoters. This Oryza sativa subsp. indica (Rice) protein is GATA transcription factor 18.